A 505-amino-acid chain; its full sequence is Cytochrome P450 52C1 (505 aa).

A helical transmembrane segment spans residues 4–21 (LFCFLAGIIVVYKAAQYY). Cysteine 453 is a binding site for heme.

This sequence belongs to the cytochrome P450 family. Heme is required as a cofactor.

It localises to the membrane. Functionally, together with an NADPH cytochrome P450 the enzyme system catalyzes the terminal hydroxylation as the first step in the assimilation of alkanes and fatty acids. This is Cytochrome P450 52C1 (CYP52C1) from Candida tropicalis (Yeast).